The primary structure comprises 302 residues: Phospho-N-acetylmuramoyl-pentapeptide-transferase (302 aa).

10 helical membrane-spanning segments follow: residues 1–21 (MIAANFLLNLFLYPILIKLFR), 42–62 (GTPTMGGILFVLTGFLFGMIS), 67–87 (MVLLGMFLFFLIGFLDDFLSV), 95–115 (LKTYQKALLQTLAAFIMLLLI), 123–143 (FFGSTIEMGKWYYLFALLVIV), 154–174 (GLDGLAGWIYVSGSIPYWFFL), 178–198 (GVSEDILLILGVGVLAFLVFN), 204–224 (IFMGDTGSITLGGVLGTVSVL), 229–249 (FYLVLFFMIPVIETLSVILQV), and 279–299 (IVAVFTVFNLISSLVALEIFG).

This sequence belongs to the glycosyltransferase 4 family. MraY subfamily. It depends on Mg(2+) as a cofactor.

It is found in the cell inner membrane. It carries out the reaction UDP-N-acetyl-alpha-D-muramoyl-L-alanyl-gamma-D-glutamyl-meso-2,6-diaminopimeloyl-D-alanyl-D-alanine + di-trans,octa-cis-undecaprenyl phosphate = di-trans,octa-cis-undecaprenyl diphospho-N-acetyl-alpha-D-muramoyl-L-alanyl-D-glutamyl-meso-2,6-diaminopimeloyl-D-alanyl-D-alanine + UMP. Its pathway is cell wall biogenesis; peptidoglycan biosynthesis. Functionally, catalyzes the initial step of the lipid cycle reactions in the biosynthesis of the cell wall peptidoglycan: transfers peptidoglycan precursor phospho-MurNAc-pentapeptide from UDP-MurNAc-pentapeptide onto the lipid carrier undecaprenyl phosphate, yielding undecaprenyl-pyrophosphoryl-MurNAc-pentapeptide, known as lipid I. The polypeptide is Phospho-N-acetylmuramoyl-pentapeptide-transferase (Thermotoga maritima (strain ATCC 43589 / DSM 3109 / JCM 10099 / NBRC 100826 / MSB8)).